Here is a 191-residue protein sequence, read N- to C-terminus: Calcium and integrin-binding protein 1 (191 aa).

Gly2 carries N-myristoyl glycine lipidation. 2 consecutive EF-hand domains span residues 103–138 (TPDI…LTGE) and 148–183 (EMKQ…SPDF). Positions 116, 118, 120, 122, 127, 161, 163, 165, 167, and 172 each coordinate Ca(2+).

Monomer. Interacts with the heterodimeric integrin alpha-IIb/beta3 (ITGA2B-ITGB3). Interacts with ITGA2B (via cytoplasmic domain); the interaction is direct and calcium-dependent. Interacts with the protein kinases PLK2/SNK and PRKDC (via the region immediately upstream of the kinase domain). Interacts with PLK3; the interaction inhibits PLK3 kinase activity. Interacts with PSEN2. Interacts (via C-terminus) with F8. Interacts with NBR1 (via C-terminus). Interacts with FEZ1 (via C-terminus). Interacts with UBR5 (via C-terminus); the interaction is sensitive to DNA damage, and may target CIB1 for ubiquitin-mediated degradation. Interacts with IFI6; the interaction is direct. Interacts with BCL2. Interacts with TAS1R2 (via C-terminus); the interaction is independent of the myristoylation state of CIB1. Interacts with ITPR3; the interaction occurs in a calcium dependent manner. Interacts with PTK2/FAK1. Interacts with MAP3K5; the interaction inhibits MAP3K5 activation by phosphorylation, and its subsequent interaction with TRAF2. Interacts (via C-terminal region) with STMN2 (via the N-terminal region); the interaction is direct, occurs in a calcium-dependent manner and attenuates the STMN2-induced neurite outgrowth inhibition. Interacts with SPHK1, the interaction occurs in a calcium-dependent manner. Interacts with ITGA2B (via C-terminal cytoplasmic tail); the interaction occurs upon platelet aggregation and is stabilized/increased in a calcium and magnesium-dependent manner. Interacts with PAK1 (via N-terminal region); the interaction is direct and occurs in a calcium-dependent manner. Interacts with RAC3 (via C-terminal region); the interaction induces their association with the cytoskeleton upon alpha-IIb/beta3 integrin-mediated adhesion. Interacts with ITGA5 and ITGAV. Interacts with MYO1C. Interacts with ITGA2B (via C-terminal cytoplasmic tail region). Interacts (via C-terminal region) with PPP3R1 isoform 1 and isoform 2; the interactions increase upon cardiomyocytes hypertrophy. Interacts with CACNA1C; the interaction increases upon cardiomyocytes hypertrophy. Interacts and forms a complex with TMC6 and TMC8; the interaction stabilizes each component of the complex. As to expression, expressed strongly in Sertoli cells, weakly in pachytene spermatocytes, round spermatids and condensing spermatids (at protein level). Expressed in testis. Expressed in cardiac myocytes and endothelial cells. Expressed in heart, liver, spleen, lung, kidney, brain and inner ear. In the inner ear, expressed in the vestibule, basilar membrane and spiral ganglion cells.

Its subcellular location is the membrane. The protein resides in the cell membrane. The protein localises to the sarcolemma. It localises to the apical cell membrane. It is found in the cell projection. Its subcellular location is the ruffle membrane. The protein resides in the filopodium tip. The protein localises to the growth cone. It localises to the lamellipodium. It is found in the cytoplasm. Its subcellular location is the cytoskeleton. The protein resides in the microtubule organizing center. The protein localises to the centrosome. It localises to the perinuclear region. It is found in the nucleus. Its subcellular location is the neuron projection. The protein resides in the perikaryon. Functionally, calcium-binding protein that plays a role in the regulation of numerous cellular processes, such as cell differentiation, cell division, cell proliferation, cell migration, thrombosis, angiogenesis, cardiac hypertrophy and apoptosis. Involved in bone marrow megakaryocyte differentiation by negatively regulating thrombopoietin-mediated signaling pathway. Participates in the endomitotic cell cycle of megakaryocyte, a form of mitosis in which both karyokinesis and cytokinesis are interrupted. Plays a role in integrin signaling by negatively regulating alpha-IIb/beta3 activation in thrombin-stimulated megakaryocytes preventing platelet aggregation. Up-regulates PTK2/FAK1 activity, and is also needed for the recruitment of PTK2/FAK1 to focal adhesions; it thus appears to play an important role in focal adhesion formation. Positively regulates cell migration on fibronectin in a CDC42-dependent manner, the effect being negatively regulated by PAK1. Functions as a negative regulator of stress activated MAP kinase (MAPK) signaling pathways. Down-regulates inositol 1,4,5-trisphosphate receptor-dependent calcium signaling. Involved in sphingosine kinase SPHK1 translocation to the plasma membrane in a N-myristoylation-dependent manner preventing TNF-alpha-induced apoptosis. Regulates serine/threonine-protein kinase PLK3 activity for proper completion of cell division progression. Plays a role in microtubule (MT) dynamics during neuronal development; disrupts the MT depolymerization activity of STMN2 attenuating NGF-induced neurite outgrowth and the MT reorganization at the edge of lamellipodia. Promotes cardiomyocyte hypertrophy via activation of the calcineurin/NFAT signaling pathway. Stimulates calcineurin PPP3R1 activity by mediating its anchoring to the sarcolemma. In ischemia-induced (pathological or adaptive) angiogenesis, stimulates endothelial cell proliferation, migration and microvessel formation by activating the PAK1 and ERK1/ERK2 signaling pathway. Also promotes cancer cell survival and proliferation. May regulate cell cycle and differentiation of spermatogenic germ cells, and/or differentiation of supporting Sertoli cells. Forms a complex with TMC6/EVER1 and TMC8/EVER2 in lymphocytes and keratynocytes where CIB1 stabilizes TMC6 and TMC8 levels and reciprocally. The protein is Calcium and integrin-binding protein 1 (Cib1) of Mus musculus (Mouse).